We begin with the raw amino-acid sequence, 288 residues long: Heme oxygenase 1 (288 aa).

The Cytoplasmic portion of the chain corresponds to 1-265; sequence MERPQPDSMP…KTPLNTHSQA (265 aa). Residues lysine 18, histidine 25, tyrosine 134, and arginine 183 each coordinate heme b. Positions 223 to 260 are disordered; it reads HDTKDQSPSRAPGLRQRASNKAQDSAPVETPRGKTPLN. Residue serine 229 is modified to Phosphoserine. A helical; Anchor for type IV membrane protein transmembrane segment spans residues 266 to 288; it reads PLLRWVLTLSFLVATVAVGLYAM.

This sequence belongs to the heme oxygenase family. Homodimer and higher order homooligomer. Oligomerization is crucial for its stability and function in the endoplasmic reticulum. Interacts with FLVCR2; this interaction is potentiated in the presence of heme. A soluble form arises by proteolytic removal of the membrane anchor.

It localises to the endoplasmic reticulum membrane. It carries out the reaction heme b + 3 reduced [NADPH--hemoprotein reductase] + 3 O2 = biliverdin IXalpha + CO + Fe(2+) + 3 oxidized [NADPH--hemoprotein reductase] + 3 H2O + H(+). Its function is as follows. Catalyzes the oxidative cleavage of heme at the alpha-methene bridge carbon, released as carbon monoxide (CO), to generate biliverdin IXalpha, while releasing the central heme iron chelate as ferrous iron. Affords protection against programmed cell death and this cytoprotective effect relies on its ability to catabolize free heme and prevent it from sensitizing cells to undergo apoptosis. Catalyzes the oxidative cleavage of heme at the alpha-methene bridge carbon, released as carbon monoxide (CO), to generate biliverdin IXalpha, while releasing the central heme iron chelate as ferrous iron. This Pongo abelii (Sumatran orangutan) protein is Heme oxygenase 1 (HMOX1).